Consider the following 873-residue polypeptide: K(+)/H(+) antiporter 1 (873 aa).

The Extracellular portion of the chain corresponds to 1-23 (MANTVGGILSGVNPFHYNSSSPL). A helical membrane pass occupies residues 24–44 (TLFLFQACLILLVCNLIHIPF). The Cytoplasmic segment spans residues 45–51 (SMMRQPK). The chain crosses the membrane as a helical span at residues 52–72 (VISEVISGVILGPTIFGQIPN). At 73–82 (YTNTIFPTSS) the chain is on the extracellular side. A helical membrane pass occupies residues 83-103 (IPGLNLVANLGIILFMFFLGL). The Cytoplasmic segment spans residues 104-116 (EVDIAFIKKHLKK). The chain crosses the membrane as a helical span at residues 117–137 (ALVIGIVTLAVPFGFGCLLAI). The Extracellular portion of the chain corresponds to 138-154 (PLFHTYANKTEGERHIK). A helical membrane pass occupies residues 155-175 (FSVFMVFIAVSISVTAFPVLC). Residues 176 to 188 (RILNELRLIKDRA) are Cytoplasmic-facing. Residues 189-209 (GIVVLAAGIINDIMGWILLAL) form a helical membrane-spanning segment. Residues 210 to 220 (SIILSSAEGSP) lie on the Extracellular side of the membrane. A helical transmembrane segment spans residues 221–241 (VNTVYILLITFAWFLIYFFPL). Residues 242–267 (KYLLRWVLIRTHELDRSKPSPLATMC) lie on the Cytoplasmic side of the membrane. The chain crosses the membrane as a helical span at residues 268–288 (ILFIMFISAYFTDIIGVHPIF). Over 289–316 (GAFIAGLVVPRDDHYVVKLTERMEDIPN) the chain is Extracellular. Residues 317 to 337 (IVFIPIYFAVAGLNVDLTLLN) traverse the membrane as a helical segment. Residues 338–341 (EGRD) are Cytoplasmic-facing. A helical transmembrane segment spans residues 342 to 362 (WGYVFATIGIAIFTKIISGTL). Topologically, residues 363 to 375 (TAKLTGLFWREAT) are extracellular. The helical transmembrane segment at 376–396 (AAGVLMSCKGIVEIVVLTVGL) threads the bilayer. Topologically, residues 397–404 (NAGIISRK) are cytoplasmic. The chain crosses the membrane as a helical span at residues 405–425 (IFGMFVLMALVSTFVTTPLTQ). The Extracellular portion of the chain corresponds to 426-726 (LVYPDSYRDG…DRFKRKRFNL (301 aa)). Position 557 is a phosphoserine (Ser557). Residue Lys562 forms a Glycyl lysine isopeptide (Lys-Gly) (interchain with G-Cter in ubiquitin) linkage. Residues 727-747 (LLPKPYLTQSDYLGLYLLLLI) form a helical membrane-spanning segment. The Cytoplasmic portion of the chain corresponds to 748 to 873 (CYRDGYNNDN…TLIVHHFSSE (126 aa)).

It belongs to the monovalent cation:proton antiporter 2 (CPA2) transporter (TC 2.A.37) family.

It localises to the membrane. Functionally, potassium-proton antiport. The protein is K(+)/H(+) antiporter 1 (KHA1) of Saccharomyces cerevisiae (strain ATCC 204508 / S288c) (Baker's yeast).